Consider the following 292-residue polypeptide: tRNA-cytidine(32) 2-sulfurtransferase (292 aa).

The short motif at 53-58 (SGGKDS) is the PP-loop motif element. [4Fe-4S] cluster is bound by residues C128, C131, and C219.

Belongs to the TtcA family. Homodimer. The cofactor is Mg(2+). It depends on [4Fe-4S] cluster as a cofactor.

It localises to the cytoplasm. The catalysed reaction is cytidine(32) in tRNA + S-sulfanyl-L-cysteinyl-[cysteine desulfurase] + AH2 + ATP = 2-thiocytidine(32) in tRNA + L-cysteinyl-[cysteine desulfurase] + A + AMP + diphosphate + H(+). The protein operates within tRNA modification. Its function is as follows. Catalyzes the ATP-dependent 2-thiolation of cytidine in position 32 of tRNA, to form 2-thiocytidine (s(2)C32). The sulfur atoms are provided by the cysteine/cysteine desulfurase (IscS) system. The polypeptide is tRNA-cytidine(32) 2-sulfurtransferase (Cereibacter sphaeroides (strain ATCC 17029 / ATH 2.4.9) (Rhodobacter sphaeroides)).